Consider the following 517-residue polypeptide: Heat shock 70-related protein 5 (517 aa).

This sequence belongs to the heat shock protein 70 family.

May function in protein folding and assembly, and disassembly of protein complexes. The protein is Heat shock 70-related protein 5 of Dictyostelium discoideum (Social amoeba).